Here is a 358-residue protein sequence, read N- to C-terminus: MKITLKKLLILAIVPFLYACSSDRANYDDVFAKDTHGLDLLTGQFSQNIDQIWGVNELLVASRKDYVKYNDSYYTRSHISFDEGMITIETLADVNRLHSAIVHTLLMGSDAKGIDLFASGDTPISSRPFLVGQVVNNFGQSITNVNVANNFATYLIQNKLQQRRLNNGRTVQFVSIQMIANHVNIRARKYLPFVRKASRQYGIDESLILGIMQTESSFNPYAISYANAIGLMQVVPHSAGRDIFKMKGRSGQPSKSYLFDPAKNVDAGTSYLWLLRNEYLAGIQNPTSMRYAMISAYNSGAGAVLRVFSDDPDEAIYIINRMQPEQVYRILTTGHPSAQARNYLVKVDKAQRSYRRVR.

The signal sequence occupies residues 1-19 (MKITLKKLLILAIVPFLYA). Cysteine 20 carries N-palmitoyl cysteine lipidation. Cysteine 20 is lipidated: S-diacylglycerol cysteine.

This sequence belongs to the transglycosylase Slt family.

It localises to the cell outer membrane. The catalysed reaction is Exolytic cleavage of the (1-&gt;4)-beta-glycosidic linkage between N-acetylmuramic acid (MurNAc) and N-acetylglucosamine (GlcNAc) residues in peptidoglycan, from either the reducing or the non-reducing ends of the peptidoglycan chains, with concomitant formation of a 1,6-anhydrobond in the MurNAc residue.. Its function is as follows. Murein-degrading enzyme. May play a role in recycling of muropeptides during cell elongation and/or cell division. The chain is Membrane-bound lytic murein transglycosylase C from Actinobacillus succinogenes (strain ATCC 55618 / DSM 22257 / CCUG 43843 / 130Z).